The following is a 617-amino-acid chain: Putative type VI secretion system protein VgrGB (617 aa).

The interval 449–469 (RTFHATNPSPYPLPASKTRTS) is disordered.

The protein belongs to the VgrG protein family.

In terms of biological role, a Vgr protein that is probably part of a type VI secretion system (T6SS). May be required for export of proteins involved in Rhs-mediated cellular contact-dependent growth inhibition (CDI). This Dickeya dadantii (strain 3937) (Erwinia chrysanthemi (strain 3937)) protein is Putative type VI secretion system protein VgrGB (vgrGB).